A 285-amino-acid chain; its full sequence is Release factor glutamine methyltransferase (285 aa).

S-adenosyl-L-methionine contacts are provided by D143 and N189. A substrate-binding site is contributed by 189 to 192; sequence NPPY.

The protein belongs to the protein N5-glutamine methyltransferase family. PrmC subfamily.

It carries out the reaction L-glutaminyl-[peptide chain release factor] + S-adenosyl-L-methionine = N(5)-methyl-L-glutaminyl-[peptide chain release factor] + S-adenosyl-L-homocysteine + H(+). Methylates the class 1 translation termination release factors RF1/PrfA and RF2/PrfB on the glutamine residue of the universally conserved GGQ motif. This is Release factor glutamine methyltransferase from Clostridium acetobutylicum (strain ATCC 824 / DSM 792 / JCM 1419 / IAM 19013 / LMG 5710 / NBRC 13948 / NRRL B-527 / VKM B-1787 / 2291 / W).